A 113-amino-acid chain; its full sequence is Large ribosomal subunit protein uL22 (113 aa).

Belongs to the universal ribosomal protein uL22 family. Part of the 50S ribosomal subunit.

In terms of biological role, this protein binds specifically to 23S rRNA; its binding is stimulated by other ribosomal proteins, e.g. L4, L17, and L20. It is important during the early stages of 50S assembly. It makes multiple contacts with different domains of the 23S rRNA in the assembled 50S subunit and ribosome. The globular domain of the protein is located near the polypeptide exit tunnel on the outside of the subunit, while an extended beta-hairpin is found that lines the wall of the exit tunnel in the center of the 70S ribosome. The protein is Large ribosomal subunit protein uL22 of Halalkalibacterium halodurans (strain ATCC BAA-125 / DSM 18197 / FERM 7344 / JCM 9153 / C-125) (Bacillus halodurans).